A 114-amino-acid polypeptide reads, in one-letter code: Transmembrane protein 14DP (114 aa).

The next 4 helical transmembrane spans lie at 8 to 28 (LVPLHWFGFGYTALVVSGGIV), 36 to 56 (APSLAAGLLFGSLAGVGAYQL), 63 to 80 (VWDFLAATSVTFVGIMGM), and 83 to 103 (YYYGKFMPVGLIAGASLLMAA).

Belongs to the TMEM14 family.

It localises to the membrane. The chain is Transmembrane protein 14DP (TMEM14DP) from Homo sapiens (Human).